Consider the following 375-residue polypeptide: Putative serine protease 47 (375 aa).

An N-terminal signal peptide occupies residues 1 to 23; the sequence is MGYCQGVSQVAVVLLMFPKEKEA. Positions 41-60 are disordered; sequence DGQLPMGPHSRASQVAPETT. Residues 51–60 are compositionally biased toward polar residues; sequence RASQVAPETT. The region spanning 81–323 is the Peptidase S1 domain; it reads IYGGRDAAAG…FINWIDEIMR (243 aa). An intrachain disulfide couples Cys106 to Cys122. Active-site charge relay system residues include His121 and Asp172. N-linked (GlcNAc...) asparagine glycans are attached at residues Asn183 and Asn203. A disulfide bond links Cys206 and Cys281. Ser275 functions as the Charge relay system in the catalytic mechanism.

The protein belongs to the peptidase S1 family.

It localises to the secreted. The protein is Putative serine protease 47 (PRSS47P) of Homo sapiens (Human).